The following is a 223-amino-acid chain: Deoxyribose-phosphate aldolase (223 aa).

D89 functions as the Proton donor/acceptor in the catalytic mechanism. Residue K152 is the Schiff-base intermediate with acetaldehyde of the active site. K181 functions as the Proton donor/acceptor in the catalytic mechanism.

This sequence belongs to the DeoC/FbaB aldolase family. DeoC type 1 subfamily.

The protein localises to the cytoplasm. It catalyses the reaction 2-deoxy-D-ribose 5-phosphate = D-glyceraldehyde 3-phosphate + acetaldehyde. The protein operates within carbohydrate degradation; 2-deoxy-D-ribose 1-phosphate degradation; D-glyceraldehyde 3-phosphate and acetaldehyde from 2-deoxy-alpha-D-ribose 1-phosphate: step 2/2. Functionally, catalyzes a reversible aldol reaction between acetaldehyde and D-glyceraldehyde 3-phosphate to generate 2-deoxy-D-ribose 5-phosphate. This chain is Deoxyribose-phosphate aldolase, found in Listeria monocytogenes serovar 1/2a (strain ATCC BAA-679 / EGD-e).